Reading from the N-terminus, the 357-residue chain is Protein-glutamate methylesterase/protein-glutamine glutaminase 5 (357 aa).

A Response regulatory domain is found at 10–127; that stretch reads RVLVVDDSSF…IDAQKAFKEE (118 aa). A 4-aspartylphosphate modification is found at Asp-61. Residues 161-357 form the CheB-type methylesterase domain; the sequence is PRPAGQRYQY…IGTEITKIAG (197 aa). Active-site residues include Ser-176, His-203, and Asp-301.

This sequence belongs to the CheB family. In terms of processing, phosphorylated by CheA. Phosphorylation of the N-terminal regulatory domain activates the methylesterase activity.

Its subcellular location is the cytoplasm. It carries out the reaction [protein]-L-glutamate 5-O-methyl ester + H2O = L-glutamyl-[protein] + methanol + H(+). It catalyses the reaction L-glutaminyl-[protein] + H2O = L-glutamyl-[protein] + NH4(+). Its function is as follows. Involved in chemotaxis. Part of a chemotaxis signal transduction system that modulates chemotaxis in response to various stimuli. Catalyzes the demethylation of specific methylglutamate residues introduced into the chemoreceptors (methyl-accepting chemotaxis proteins or MCP) by CheR. Also mediates the irreversible deamidation of specific glutamine residues to glutamic acid. This Geobacter metallireducens (strain ATCC 53774 / DSM 7210 / GS-15) protein is Protein-glutamate methylesterase/protein-glutamine glutaminase 5.